A 398-amino-acid polypeptide reads, in one-letter code: S-adenosylmethionine synthase (398 aa).

ATP is bound at residue H17. Residue D19 coordinates Mg(2+). E45 is a binding site for K(+). L-methionine contacts are provided by E58 and Q101. Residues 101-111 (QSPDIAQGVDT) are flexible loop. Residues 176 to 178 (DGK), 243 to 244 (RF), D252, 258 to 259 (RK), and K279 each bind ATP. D252 serves as a coordination point for L-methionine. An L-methionine-binding site is contributed by K283.

It belongs to the AdoMet synthase family. Homotetramer; dimer of dimers. It depends on Mg(2+) as a cofactor. K(+) is required as a cofactor.

The protein localises to the cytoplasm. The enzyme catalyses L-methionine + ATP + H2O = S-adenosyl-L-methionine + phosphate + diphosphate. Its pathway is amino-acid biosynthesis; S-adenosyl-L-methionine biosynthesis; S-adenosyl-L-methionine from L-methionine: step 1/1. Catalyzes the formation of S-adenosylmethionine (AdoMet) from methionine and ATP. The overall synthetic reaction is composed of two sequential steps, AdoMet formation and the subsequent tripolyphosphate hydrolysis which occurs prior to release of AdoMet from the enzyme. The polypeptide is S-adenosylmethionine synthase (Staphylococcus saprophyticus subsp. saprophyticus (strain ATCC 15305 / DSM 20229 / NCIMB 8711 / NCTC 7292 / S-41)).